Reading from the N-terminus, the 468-residue chain is Aldehyde dehydrogenase family 3 member B1 (468 aa).

Position 1 is an N-acetylmethionine (methionine 1). 188–193 contributes to the NAD(+) binding site; that stretch reads GNTYVG. Catalysis depends on residues glutamate 210 and cysteine 244. S-palmitoyl cysteine attachment occurs at residues cysteine 462 and cysteine 463. Residue cysteine 465 is modified to Cysteine methyl ester. The S-geranylgeranyl cysteine moiety is linked to residue cysteine 465. Residues 466–468 constitute a propeptide, removed in mature form; that stretch reads TLL.

This sequence belongs to the aldehyde dehydrogenase family. Post-translationally, dually lipidated in the C-terminus; prenylation occurs prior to, and is a prerequisite for palmitoylation. It is also required for activity towards long-chain substrates.

The protein resides in the cell membrane. The catalysed reaction is an aldehyde + NAD(+) + H2O = a carboxylate + NADH + 2 H(+). It catalyses the reaction a long-chain fatty aldehyde + NAD(+) + H2O = a long-chain fatty acid + NADH + 2 H(+). The enzyme catalyses a medium-chain fatty aldehyde + NAD(+) + H2O = a medium-chain fatty acid + NADH + 2 H(+). It carries out the reaction octanal + NAD(+) + H2O = octanoate + NADH + 2 H(+). The catalysed reaction is nonanal + NAD(+) + H2O = nonanoate + NADH + 2 H(+). It catalyses the reaction hexadecanoate + NADH + 2 H(+) = hexadecanal + NAD(+) + H2O. The enzyme catalyses (2E)-octenal + NAD(+) + H2O = (2E)-octenoate + NADH + 2 H(+). It carries out the reaction (E)-non-2-enal + NAD(+) + H2O = (E)-non-2-enoate + NADH + 2 H(+). The catalysed reaction is (E)-4-hydroxynon-2-enal + NAD(+) + H2O = (E)-4-hydroxynon-2-enoate + NADH + 2 H(+). It catalyses the reaction (2E)-hexadecenal + NAD(+) + H2O = (E)-hexadec-2-enoate + NADH + 2 H(+). The enzyme catalyses benzaldehyde + NAD(+) + H2O = benzoate + NADH + 2 H(+). It carries out the reaction an aldehyde + NADP(+) + H2O = a carboxylate + NADPH + 2 H(+). The catalysed reaction is a medium-chain fatty aldehyde + NADP(+) + H2O = a medium-chain fatty acid + NADPH + 2 H(+). It catalyses the reaction hexanal + NADP(+) + H2O = hexanoate + NADPH + 2 H(+). The enzyme catalyses octanal + NADP(+) + H2O = octanoate + NADPH + 2 H(+). It carries out the reaction nonanal + NADP(+) + H2O = nonanoate + NADPH + 2 H(+). The catalysed reaction is (2E)-octenal + NADP(+) + H2O = (2E)-octenoate + NADPH + 2 H(+). It catalyses the reaction (E)-non-2-enal + NADP(+) + H2O = (E)-non-2-enoate + NADPH + 2 H(+). The enzyme catalyses (E)-4-hydroxynon-2-enal + NADP(+) + H2O = (E)-4-hydroxynon-2-enoate + NADPH + 2 H(+). It carries out the reaction benzaldehyde + NADP(+) + H2O = benzoate + NADPH + 2 H(+). Its pathway is alcohol metabolism; ethanol degradation; acetate from ethanol: step 2/2. Its function is as follows. Oxidizes medium and long chain saturated and unsaturated fatty aldehydes generated in the plasma membrane into non-toxic fatty acids. May have a protective role against the cytotoxicity induced by lipid peroxidation. Short-chain fatty aldehydes are not good substrates. Can use both NADP(+) and NAD(+) as electron acceptor in vitro, however in vivo preference will depend on their tissue levels. Low activity towards acetaldehyde and 3,4-dihydroxyphenylacetaldehyde. Able to metabolize aromatic aldehydes such as benzaldehyde to their acid form. This chain is Aldehyde dehydrogenase family 3 member B1 (Aldh3b1), found in Rattus norvegicus (Rat).